A 328-amino-acid polypeptide reads, in one-letter code: MVVFTGSTVEEAIQKGLKELDIPRMKAHIKVISREKKGFLGLFGKKPAQVDIEAISETTVVKANQQVVKGVPKKINDLNEPVKTVSEETVDLGHVVDAIKKIEEEGQGISDEVKAEILKHERHASTILEETGHIEILNELQIEEAMREEAGADDLETEQDQAESQELEDLGLKVETNFDIEQVATEVMAYVQTIIDDMDVEATLSNDYNRRSINLQIDTNEPGRIIGYHGKVLKALQLLAQNYLYNRYSRTFYVTINVNDYVEHRAEVLQTYAQKLATRVLEEGRSHKTDPMSNSERKIIHRIISRMDGVTSYSEGDEPNRYVVVDTE.

A jag_N domain region spans residues 3–53; it reads VFTGSTVEEAIQKGLKELDIPRMKAHIKVISREKKGFLGLFGKKPAQVDIE. The linker stretch occupies residues 54 to 180; that stretch reads AISETTVVKA…GLKVETNFDI (127 aa). Residue T89 is modified to Phosphothreonine. In terms of domain architecture, KH spans 181 to 258; the sequence is EQVATEVMAY…SRTFYVTINV (78 aa). The 66-residue stretch at 263-328 folds into the R3H domain; it reads EHRAEVLQTY…PNRYVVVDTE (66 aa).

It belongs to the KhpB RNA-binding protein family. In terms of assembly, interacts with KhpA; the 2 proteins colocalize throughout the cell cycle, with some increase at midcell in dividing cells. Interacts with StkP which phosphorylates it, interacts with MltG, MreC, RodZ and YidC2. In terms of processing, phosphorylated on Thr-89 by StkP; there is another poorly phosphorylated residue in the protein. Dephosphorylated by PhpP.

It localises to the cytoplasm. A probable RNA chaperone. Forms a complex with KhpA which binds to cellular RNA and controls its expression. Plays a role in peptidoglycan (PG) homeostasis and cell length regulation. Its function is as follows. Forms a complex with KhpA which presumably binds to about 170 cellular RNAs (mRNA, tRNA intergenic RNA and sRNAs); the proteins alone each bind the same set of RNAs. Suppresses the requirement for PBP2b (penA, a transpeptidase) in peripheral peptidoglycan (PG) synthesis. May function as a pleiotropic RNA chaperone controlling pneumococcal cell division, including PG homeostasis and regulating peripheral PG synthesis by the elongasome. The sequence is that of RNA-binding protein KhpB from Streptococcus pneumoniae serotype 2 (strain D39 / NCTC 7466).